Reading from the N-terminus, the 759-residue chain is GTPase-activating protein rrc-1 (759 aa).

Positions 164–243 constitute an SH3 domain; that stretch reads PAIAAAVVTK…PRDCVMLIDD (80 aa). The Rho-GAP domain maps to 280-473; the sequence is LELTDLYMRT…FFIENSESLF (194 aa). The segment at 591–624 is disordered; the sequence is ARSMRPTSRPPPSPRTRRARFSNGSSNNVQKLNE. Polar residues predominate over residues 612–622; that stretch reads SNGSSNNVQKL.

Expressed in coelomocytes, excretory cells, uterine-seam cells and GLR cells.

Functions as a GTPase-activating protein (GAP) for ced-10/rac-1 and CDC42. This chain is GTPase-activating protein rrc-1 (rrc-1), found in Caenorhabditis elegans.